We begin with the raw amino-acid sequence, 2335 residues long: uncharacterized protein (2335 aa).

The next 6 helical transmembrane spans lie at 114–134, 148–167, 172–194, 214–234, 255–275, and 307–327; these read FMIG…AHII, FISG…SIVF, VVIP…IVKY, IFFL…PFLS, EFGF…LSLL, and FVNL…IAYF. Polar residues predominate over residues 1043-1052; it reads ATSESISFNQ. A disordered region spans residues 1043-1064; sequence ATSESISFNQTKEKSNSTLGRL. Coiled coils occupy residues 1174-1202 and 1417-1447; these read VTLK…MKEA and KKRE…EKIV. Residues 1458–1471 show a composition bias toward polar residues; sequence QTSQLTKNSFNPSR. The segment at 1458 to 1479 is disordered; it reads QTSQLTKNSFNPSRQKTDKNLE. The helical transmembrane segment at 2086–2106 threads the bilayer; it reads VWFPSGSLSQQVLPVHYIYVF. The segment at 2200 to 2222 is disordered; the sequence is KQEKRILKSKQRRKITDSKQSTE.

This sequence belongs to the ycf78 family.

The protein localises to the plastid. It localises to the chloroplast membrane. This is an uncharacterized protein from Tetradesmus obliquus (Green alga).